We begin with the raw amino-acid sequence, 676 residues long: Cysteine-rich receptor-like protein kinase 8 (676 aa).

A signal peptide spans 1-34 (MYIVSMFGLAGLEALICFIFLFLFSFLTSFKASA). Over 35-291 (QNPFYLNHDC…IPGKSGNSTV (257 aa)) the chain is Extracellular. Gnk2-homologous domains are found at residues 38–142 (FYLN…HKNF) and 151–255 (ELIM…LYAF). 8 N-linked (GlcNAc...) asparagine glycosylation sites follow: N46, N53, N71, N114, N159, N187, N257, and N288. A helical membrane pass occupies residues 292–312 (LVVAIVVLAVLLFIALVGYCF). Residues 313-676 (LAQRTKKTFD…DELITDLYPR (364 aa)) are Cytoplasmic-facing. In terms of domain architecture, Protein kinase spans 353-639 (FAESNKIGRG…TLPVPRQPGF (287 aa)). ATP-binding positions include 359-367 (IGRGGFGEV) and K381. Y426 carries the phosphotyrosine modification. The Proton acceptor role is filled by D478. The residue at position 482 (S482) is a Phosphoserine. Phosphothreonine is present on T518. Y526 bears the Phosphotyrosine mark. A disordered region spans residues 640–666 (FIQSSPVKDPTDSDQSTTTKSTPASID). Residues 652-662 (SDQSTTTKSTP) show a composition bias toward low complexity.

The protein belongs to the protein kinase superfamily. Ser/Thr protein kinase family. CRK subfamily.

The protein localises to the membrane. The catalysed reaction is L-seryl-[protein] + ATP = O-phospho-L-seryl-[protein] + ADP + H(+). The enzyme catalyses L-threonyl-[protein] + ATP = O-phospho-L-threonyl-[protein] + ADP + H(+). The chain is Cysteine-rich receptor-like protein kinase 8 (CRK8) from Arabidopsis thaliana (Mouse-ear cress).